We begin with the raw amino-acid sequence, 40 residues long: Large ribosomal subunit protein bL36A (40 aa).

Belongs to the bacterial ribosomal protein bL36 family.

The polypeptide is Large ribosomal subunit protein bL36A (Kineococcus radiotolerans (strain ATCC BAA-149 / DSM 14245 / SRS30216)).